A 415-amino-acid chain; its full sequence is MLLAKTPCLLLVQVIAAGISFALTSLQDQCETLQHNSNFTGLACNASIDMIGTCWPSTAAGQMVARPCPEYFHGVQYNTTGNVYRECHLNGSWAGRGDYAQCQEILKQEKKTKVHYHIAIVINFLGHSISLCALLVAFILFLRLRSIRCLRNIIHWNLITAFILRNVTWFVMQLTLSHEAHDSNVVWCRLVTIAHNYFYVTNFFWMFGEGCYLHTAIVLTYSTDKLRKWMFICIGWCIPFPIIVAWAIGKLYYDNEKCWFGKKAGVYTDFIYQGPVILVLLINFIFLFNIVRILMTKLRASTTSETIQYRKAVKATLVLLPLLGITYMLFFVTPGEDEISRIVFIYFNSFLQSFQGFFVSVFYCFLNSEVRSAVRKRWHRWQDKHSIRARVARAMSIPTSPTRISFHSIKQSSAI.

Residues 1–24 (MLLAKTPCLLLVQVIAAGISFALT) form the signal peptide. Over 25–111 (SLQDQCETLQ…CQEILKQEKK (87 aa)) the chain is Extracellular. 3 disulfide bridges follow: cysteine 30–cysteine 54, cysteine 44–cysteine 87, and cysteine 68–cysteine 102. 4 N-linked (GlcNAc...) asparagine glycosylation sites follow: asparagine 38, asparagine 45, asparagine 78, and asparagine 90. The helical transmembrane segment at 112 to 142 (TKVHYHIAIVINFLGHSISLCALLVAFILFL) threads the bilayer. Over 143-149 (RLRSIRC) the chain is Cytoplasmic. A helical transmembrane segment spans residues 150–174 (LRNIIHWNLITAFILRNVTWFVMQL). At 175-189 (TLSHEAHDSNVVWCR) the chain is on the extracellular side. Cysteine 188 and cysteine 258 are oxidised to a cystine. The helical transmembrane segment at 190-218 (LVTIAHNYFYVTNFFWMFGEGCYLHTAIV) threads the bilayer. At 219 to 225 (LTYSTDK) the chain is on the cytoplasmic side. A helical transmembrane segment spans residues 226-253 (LRKWMFICIGWCIPFPIIVAWAIGKLYY). Topologically, residues 254-269 (DNEKCWFGKKAGVYTD) are extracellular. The helical transmembrane segment at 270-295 (FIYQGPVILVLLINFIFLFNIVRILM) threads the bilayer. Residues 296 to 306 (TKLRASTTSET) lie on the Cytoplasmic side of the membrane. The chain crosses the membrane as a helical span at residues 307-331 (IQYRKAVKATLVLLPLLGITYMLFF). Over 332–338 (VTPGEDE) the chain is Extracellular. A helical transmembrane segment spans residues 339–368 (ISRIVFIYFNSFLQSFQGFFVSVFYCFLNS). The Cytoplasmic segment spans residues 369-415 (EVRSAVRKRWHRWQDKHSIRARVARAMSIPTSPTRISFHSIKQSSAI).

Belongs to the G-protein coupled receptor 2 family. In terms of assembly, interacts (via N-terminal extracellular domain) with CRF and UCN.

The protein localises to the cell membrane. In terms of biological role, G-protein coupled receptor for CRH (corticotropin-releasing factor) and UCN (urocortin). Has high affinity for CRH and UCN. Ligand binding causes a conformation change that triggers signaling via guanine nucleotide-binding proteins (G proteins) and down-stream effectors, such as adenylate cyclase. Promotes the activation of adenylate cyclase, leading to increased intracellular cAMP levels. The sequence is that of Corticotropin-releasing factor receptor 1 (crhr1) from Xenopus laevis (African clawed frog).